The chain runs to 357 residues: NADH-quinone oxidoreductase subunit H (357 aa).

8 consecutive transmembrane segments (helical) span residues 26–46 (LVKI…LTLW), 92–112 (ALFV…WAVI), 127–147 (LLFV…AGWA), 164–184 (MISY…VTGS), 203–223 (GLTF…IYII), 259–279 (FFLA…LMFL), 294–314 (VPGW…FIWF), and 329–349 (LGWK…AIWM).

The protein belongs to the complex I subunit 1 family. NDH-1 is composed of 14 different subunits. Subunits NuoA, H, J, K, L, M, N constitute the membrane sector of the complex.

It localises to the cell inner membrane. It carries out the reaction a quinone + NADH + 5 H(+)(in) = a quinol + NAD(+) + 4 H(+)(out). Functionally, NDH-1 shuttles electrons from NADH, via FMN and iron-sulfur (Fe-S) centers, to quinones in the respiratory chain. The immediate electron acceptor for the enzyme in this species is believed to be ubiquinone. Couples the redox reaction to proton translocation (for every two electrons transferred, four hydrogen ions are translocated across the cytoplasmic membrane), and thus conserves the redox energy in a proton gradient. This subunit may bind ubiquinone. This is NADH-quinone oxidoreductase subunit H from Janthinobacterium sp. (strain Marseille) (Minibacterium massiliensis).